The primary structure comprises 973 residues: MASILDEYEDSLSRSAVLQTGCPSVGIPHSGYVSAHLEKEVPIFTKQRVDFTPSERITSLVVSCNQLCMSLGKDTLLRIDLGKASEPNRVELGRKDDAKVHKMFLDHTGSHLLVALSSTEVLYMNRNGQKARPLARWKGQLVESVGWNKAMGNESSTGPILVGTAQGQIFEAELSASEGGLFGPAPDLYFRPLYVLNEEGGPAPVCSLEAERGPDGRGFVIATTRQRLFQFIGRAVEDTEAQGFAGLFAAYTDHPPPFREFPSNLGYSELAFYTPKLRSAPRAFAWMMGDGVLYGSLDCGRPDSLLSEERVWEYPAGVGPGANPPLAIVLTQFHFLLLLADRVEAVCTLTGQVVLRDHFLEKFGPLRHMVKDSSTGHLWAYTERAVFRYHVQREARDVWRTYLDMNRFDLAKEYCRERPDCLDTVLAREADFCFRQHRYLESARCYALTQSYFEEIALKFLEARQEEALAEFLQRKLAGLKPTERTQATLLTTWLTELYLSRLGALQGDPDALTLYRDTRECFRTFLSSPRHKEWLFASRASIHELLASHGDTEHMVYFAVIMQDYERVVAYHCQHEAYEEALAVLARHRDPQLFYKFSPILIRHIPRQLVDAWIEMGSRLDARQLIPALVNYSQGGEAQQVSQAIRYMEFCVNVLGETEQAIHNYLLSLYARGQPASLLAYLEQAGASPHRVHYDLKYALRLCAEHGHHRACVHVYKVLELYEEAVDLALQVDVDLAKQCADLPEEDEELRKKLWLKIARHVVQEEEDVQTAMACLASCPLLKIEDVLPFFPDFVTIDHFKEAICSSLKAYNHHIQELQREMEEATASAQRIRRDLQELRGRYGTVEPQDKCSTCDFPLLNRPFYLFLCGHMFHADCLLQAVRPGLPAYKQARLEELQRKLGAAPPPTKGSVKAKEAEAGAAAVGPSREQLKADLDELVAAECVYCGELMIRSIDRPFIDPQRYEEEHLSWL.

Ala-2 carries the post-translational modification N-acetylalanine. Phosphoserine occurs at positions 3, 11, and 13. Lys-362 is modified (N6-acetyllysine). Positions 454 to 481 (EEIALKFLEARQEEALAEFLQRKLAGLK) form a coiled coil. Residues 618–772 (GSRLDARQLI…VVQEEEDVQT (155 aa)) form a CHCR repeat. Ser-689 is subject to Phosphoserine. The stretch at 802–848 (KEAICSSLKAYNHHIQELQREMEEATASAQRIRRDLQELRGRYGTVE) forms a coiled coil. The RING-type zinc finger occupies 853-947 (CSTCDFPLLN…ELVAAECVYC (95 aa)). Ser-912 carries the post-translational modification Phosphoserine.

This sequence belongs to the VPS18 family. Core component of at least two putative endosomal tethering complexes, the homotypic fusion and vacuole protein sorting (HOPS) complex and the class C core vacuole/endosome tethering (CORVET) complex. Their common core is composed of the class C Vps proteins VPS11, VPS16, VPS18 and VPS33A, which in HOPS further associates with VPS39 and VPS41 and in CORVET with VPS8 and TGFBRAP1. Interacts with RAB5C. Interacts with HOOK1. Interacts with STX7, MON1B. Associates with adaptor protein complex 3 (AP-3) and clathrin:AP-3 complexes. Interacts with SYNPO2. Interacts with PLEKHM1.

The protein resides in the late endosome membrane. Its subcellular location is the lysosome membrane. The protein localises to the early endosome. It is found in the cytoplasmic vesicle. It localises to the autophagosome. The protein resides in the clathrin-coated vesicle. Plays a role in vesicle-mediated protein trafficking to lysosomal compartments including the endocytic membrane transport and autophagic pathways. Believed to act as a core component of the putative HOPS and CORVET endosomal tethering complexes which are proposed to be involved in the Rab5-to-Rab7 endosome conversion probably implicating MON1A/B, and via binding SNAREs and SNARE complexes to mediate tethering and docking events during SNARE-mediated membrane fusion. The HOPS complex is proposed to be recruited to Rab7 on the late endosomal membrane and to regulate late endocytic, phagocytic and autophagic traffic towards lysosomes. The CORVET complex is proposed to function as a Rab5 effector to mediate early endosome fusion probably in specific endosome subpopulations. Required for fusion of endosomes and autophagosomes with lysosomes. Involved in dendrite development of Pukinje cells. This Mus musculus (Mouse) protein is Vacuolar protein sorting-associated protein 18 homolog (Vps18).